Here is a 340-residue protein sequence, read N- to C-terminus: Delta-aminolevulinic acid dehydratase (340 aa).

Zn(2+) is bound by residues C133, C135, and C143. K210 (schiff-base intermediate with substrate) is an active-site residue. 5-aminolevulinate-binding residues include R220 and R232. The active-site Schiff-base intermediate with substrate is the K263. 2 residues coordinate 5-aminolevulinate: S290 and Y329.

The protein belongs to the ALAD family. In terms of assembly, homooctamer. Zn(2+) is required as a cofactor.

It carries out the reaction 2 5-aminolevulinate = porphobilinogen + 2 H2O + H(+). It functions in the pathway porphyrin-containing compound metabolism; protoporphyrin-IX biosynthesis; coproporphyrinogen-III from 5-aminolevulinate: step 1/4. In terms of biological role, catalyzes an early step in the biosynthesis of tetrapyrroles. Binds two molecules of 5-aminolevulinate per subunit, each at a distinct site, and catalyzes their condensation to form porphobilinogen. In Candida glabrata (strain ATCC 2001 / BCRC 20586 / JCM 3761 / NBRC 0622 / NRRL Y-65 / CBS 138) (Yeast), this protein is Delta-aminolevulinic acid dehydratase (HEM2).